Here is a 191-residue protein sequence, read N- to C-terminus: ATP-dependent Clp protease proteolytic subunit 1 (191 aa).

Serine 91 functions as the Nucleophile in the catalytic mechanism. Histidine 116 is a catalytic residue.

This sequence belongs to the peptidase S14 family. Fourteen ClpP subunits assemble into 2 heptameric rings which stack back to back to give a disk-like structure with a central cavity, resembling the structure of eukaryotic proteasomes.

Its subcellular location is the cytoplasm. It carries out the reaction Hydrolysis of proteins to small peptides in the presence of ATP and magnesium. alpha-casein is the usual test substrate. In the absence of ATP, only oligopeptides shorter than five residues are hydrolyzed (such as succinyl-Leu-Tyr-|-NHMec, and Leu-Tyr-Leu-|-Tyr-Trp, in which cleavage of the -Tyr-|-Leu- and -Tyr-|-Trp bonds also occurs).. In terms of biological role, cleaves peptides in various proteins in a process that requires ATP hydrolysis. Has a chymotrypsin-like activity. Plays a major role in the degradation of misfolded proteins. This Chlamydia pneumoniae (Chlamydophila pneumoniae) protein is ATP-dependent Clp protease proteolytic subunit 1.